We begin with the raw amino-acid sequence, 442 residues long: Histidinol dehydrogenase (442 aa).

Positions 1–20 are disordered; that stretch reads MLNVTDLRGQTPSKSDIRRA. Residues Y129, Q193, and N218 each coordinate NAD(+). 3 residues coordinate substrate: T241, Q263, and H266. Zn(2+)-binding residues include Q263 and H266. Residues E332 and H333 each act as proton acceptor in the active site. Positions 333, 366, 420, and 425 each coordinate substrate. D366 contributes to the Zn(2+) binding site. A Zn(2+)-binding site is contributed by H425.

This sequence belongs to the histidinol dehydrogenase family. The cofactor is Zn(2+).

It catalyses the reaction L-histidinol + 2 NAD(+) + H2O = L-histidine + 2 NADH + 3 H(+). The protein operates within amino-acid biosynthesis; L-histidine biosynthesis; L-histidine from 5-phospho-alpha-D-ribose 1-diphosphate: step 9/9. In terms of biological role, catalyzes the sequential NAD-dependent oxidations of L-histidinol to L-histidinaldehyde and then to L-histidine. The chain is Histidinol dehydrogenase from Corynebacterium glutamicum (strain ATCC 13032 / DSM 20300 / JCM 1318 / BCRC 11384 / CCUG 27702 / LMG 3730 / NBRC 12168 / NCIMB 10025 / NRRL B-2784 / 534).